We begin with the raw amino-acid sequence, 329 residues long: Diaminopimelate epimerase (329 aa).

The substrate site is built by Asn-14 and Asn-73. The active-site Proton donor is Cys-82. Substrate is bound by residues 83 to 84 (GN), Asn-170, Asn-206, and 224 to 225 (ER). Cys-233 functions as the Proton acceptor in the catalytic mechanism. 234-235 (GT) is a substrate binding site.

The protein belongs to the diaminopimelate epimerase family. As to quaternary structure, homodimer.

The protein localises to the cytoplasm. It catalyses the reaction (2S,6S)-2,6-diaminopimelate = meso-2,6-diaminopimelate. The protein operates within amino-acid biosynthesis; L-lysine biosynthesis via DAP pathway; DL-2,6-diaminopimelate from LL-2,6-diaminopimelate: step 1/1. Catalyzes the stereoinversion of LL-2,6-diaminopimelate (L,L-DAP) to meso-diaminopimelate (meso-DAP), a precursor of L-lysine and an essential component of the bacterial peptidoglycan. The chain is Diaminopimelate epimerase from Listeria monocytogenes serotype 4a (strain HCC23).